Here is a 125-residue protein sequence, read N- to C-terminus: MIQIDFNKMGGLIPAIIQDYQNGEVLMVAFMDEKTLNLTLETGKTWFFSRSRNKYWMKGEESGNTQEVMEVLTDCDADTVVIKVKQNGPAACHTGNRSCFYVKWENGQWVEHSKPLFDPAQVYKK.

D74 lines the Mg(2+) pocket. C75 provides a ligand contact to Zn(2+). Residues D76 and D78 each coordinate Mg(2+). Zn(2+) is bound by residues C92 and C99.

It belongs to the PRA-CH family. Homodimer. Mg(2+) serves as cofactor. The cofactor is Zn(2+).

It is found in the cytoplasm. It carries out the reaction 1-(5-phospho-beta-D-ribosyl)-5'-AMP + H2O = 1-(5-phospho-beta-D-ribosyl)-5-[(5-phospho-beta-D-ribosylamino)methylideneamino]imidazole-4-carboxamide. The protein operates within amino-acid biosynthesis; L-histidine biosynthesis; L-histidine from 5-phospho-alpha-D-ribose 1-diphosphate: step 3/9. Catalyzes the hydrolysis of the adenine ring of phosphoribosyl-AMP. The protein is Phosphoribosyl-AMP cyclohydrolase of Pelobacter propionicus (strain DSM 2379 / NBRC 103807 / OttBd1).